The chain runs to 371 residues: Chaperone protein DnaJ (371 aa).

A J domain is found at 6–71; it reads DYYEILGVEK…QKRAQYDRFG (66 aa). The segment at 104–123 is disordered; the sequence is GGMGGQQRQRRNRNEPRRGS. Residues 139–217 form a CR-type zinc finger; it reads GIEKEIEFDT…CKGKGRVAEH (79 aa). Zn(2+) contacts are provided by Cys-152, Cys-155, Cys-169, Cys-172, Cys-191, Cys-194, Cys-205, and Cys-208. CXXCXGXG motif repeat units lie at residues 152–159, 169–176, 191–198, and 205–212; these read CDECKGTG, CGTCGGSG, CPTCHGQG, and CKPCKGKG.

Belongs to the DnaJ family. In terms of assembly, homodimer. Zn(2+) serves as cofactor.

Its subcellular location is the cytoplasm. Participates actively in the response to hyperosmotic and heat shock by preventing the aggregation of stress-denatured proteins and by disaggregating proteins, also in an autonomous, DnaK-independent fashion. Unfolded proteins bind initially to DnaJ; upon interaction with the DnaJ-bound protein, DnaK hydrolyzes its bound ATP, resulting in the formation of a stable complex. GrpE releases ADP from DnaK; ATP binding to DnaK triggers the release of the substrate protein, thus completing the reaction cycle. Several rounds of ATP-dependent interactions between DnaJ, DnaK and GrpE are required for fully efficient folding. Also involved, together with DnaK and GrpE, in the DNA replication of plasmids through activation of initiation proteins. This is Chaperone protein DnaJ from Bdellovibrio bacteriovorus (strain ATCC 15356 / DSM 50701 / NCIMB 9529 / HD100).